A 222-amino-acid polypeptide reads, in one-letter code: 2-amino-5-formylamino-6-ribosylaminopyrimidin-4(3H)-one 5'-monophosphate deformylase (222 aa).

E29, H31, D40, and H108 together coordinate Fe cation.

The protein belongs to the creatininase superfamily. FAPy deformylase family. As to quaternary structure, homodimer. Requires Fe(2+) as cofactor. Zn(2+) is required as a cofactor.

The catalysed reaction is 2-amino-5-formylamino-6-(5-phospho-D-ribosylamino)pyrimidin-4(3H)-one + H2O = 2,5-diamino-6-(1-D-ribosylamino)pyrimidin-4(3H)-one 5'-phosphate + formate + H(+). Its pathway is cofactor biosynthesis; coenzyme F420 biosynthesis. The protein operates within cofactor biosynthesis; riboflavin biosynthesis. Functionally, catalyzes the hydrolysis of the formamide of 2-amino-5-formylamino-6-ribosylamino-4(3H)-pyrimidinone 5'-monophosphate (FAPy) to form 2,5-diamino-6-ribosylamino-4(3H)-pyrimidinone 5'-phosphate (APy). The polypeptide is 2-amino-5-formylamino-6-ribosylaminopyrimidin-4(3H)-one 5'-monophosphate deformylase (Methanocaldococcus infernus (strain DSM 11812 / JCM 15783 / ME)).